Here is a 404-residue protein sequence, read N- to C-terminus: MNKQIQTEADELGFFGEYGGQYVPETLMPAIIELKKAYKEAKADPEFQRELEYYLSEYVGRATPLTYAASYTESLGGAKIYLKREDLNHTGAHKINNALGQALLAKRMGKKKLVAETGAGQHGVASATVAALFDMELVVFMGSEDIKRQQLNVFRMELLGAKVVAVEDGQGTLSDAVNKALQYWVSHVDDTHYLLGSALGPDPFPTIVRDFQSVIGKEIKSQILKKEGRLPDAIVACIGGGSNAIGTFYPFIKDDVALYGVEAAGQGEDTDKHALAIGKGSPGVLHGTKMYLIQDEGGQVQLAHSISAGLDYPGIGPEHSYYHDIGRVTFENASDTQAMNALINFTKHEGIIPAIESAHALSYVERLAPTMSKEDIIVVTISGRGDKDMETIRQYMAERGLAND.

K94 bears the N6-(pyridoxal phosphate)lysine mark.

Belongs to the TrpB family. In terms of assembly, tetramer of two alpha and two beta chains. Requires pyridoxal 5'-phosphate as cofactor.

The enzyme catalyses (1S,2R)-1-C-(indol-3-yl)glycerol 3-phosphate + L-serine = D-glyceraldehyde 3-phosphate + L-tryptophan + H2O. It functions in the pathway amino-acid biosynthesis; L-tryptophan biosynthesis; L-tryptophan from chorismate: step 5/5. The beta subunit is responsible for the synthesis of L-tryptophan from indole and L-serine. In Staphylococcus aureus (strain MRSA252), this protein is Tryptophan synthase beta chain.